The following is a 407-amino-acid chain: Probable peptidoglycan glycosyltransferase FtsW (407 aa).

The Cytoplasmic portion of the chain corresponds to 1 to 25; it reads MSIDFRNIIKPYPSPIITGRGIDLD. The helical transmembrane segment at 26-46 threads the bilayer; that stretch reads FPMLAGCLALLGLGLVMITSA. Residues 47–65 are Periplasmic-facing; it reads SSEVAAVQSGNTLYMMIRH. A helical membrane pass occupies residues 66–86; it reads LVYLVIGLGACIVTMMIPIAT. Residues 87-89 lie on the Cytoplasmic side of the membrane; the sequence is WQR. A helical membrane pass occupies residues 90 to 110; it reads LGWLMLIGAFGLLIMVILPGI. At 111–119 the chain is on the periplasmic side; the sequence is GREVNGSMR. Residues 120–140 form a helical membrane-spanning segment; it reads WIGFGAFNVQPSEIAKVFVVI. The Cytoplasmic segment spans residues 141–155; the sequence is YLAGYLVRRQKEVRE. A helical membrane pass occupies residues 156-176; that stretch reads SWMGFFKPFIVLLPMAGLLLM. Over 177-181 the chain is Periplasmic; it reads EPDFG. Residues 182–202 form a helical membrane-spanning segment; sequence ATVVMMGAAAAMLFLGGVGLF. A topological domain (cytoplasmic) is located at residue arginine 203. Residues 204 to 224 traverse the membrane as a helical segment; it reads FTLMVVLAVAAVTVLVQAQPY. The Periplasmic segment spans residues 225 to 283; it reads RMARLITFTDPWSDQFGSGYQLTQALIAFGRGEWLGVGLGNSVQKQFYLPEAHTDFVFS. Residues 284 to 304 form a helical membrane-spanning segment; that stretch reads VLAEELGVVGSLCTVALFVFV. Over 305–321 the chain is Cytoplasmic; it reads CVRGMYIGMWAEKAKQY. The chain crosses the membrane as a helical span at residues 322-342; it reads FAAYVAYGLSFLWIGQFLINI. Residues 343 to 355 are Periplasmic-facing; that stretch reads GVNVGLLPTKGLT. Residues 356–376 traverse the membrane as a helical segment; the sequence is LPFLSYGGSSLVICCACLGLL. At 377–407 the chain is on the cytoplasmic side; that stretch reads LRIEWESRTHLGSEEMEFSESDFAEEPTHGR.

The protein belongs to the SEDS family. FtsW subfamily.

The protein localises to the cell inner membrane. It catalyses the reaction [GlcNAc-(1-&gt;4)-Mur2Ac(oyl-L-Ala-gamma-D-Glu-L-Lys-D-Ala-D-Ala)](n)-di-trans,octa-cis-undecaprenyl diphosphate + beta-D-GlcNAc-(1-&gt;4)-Mur2Ac(oyl-L-Ala-gamma-D-Glu-L-Lys-D-Ala-D-Ala)-di-trans,octa-cis-undecaprenyl diphosphate = [GlcNAc-(1-&gt;4)-Mur2Ac(oyl-L-Ala-gamma-D-Glu-L-Lys-D-Ala-D-Ala)](n+1)-di-trans,octa-cis-undecaprenyl diphosphate + di-trans,octa-cis-undecaprenyl diphosphate + H(+). It functions in the pathway cell wall biogenesis; peptidoglycan biosynthesis. In terms of biological role, peptidoglycan polymerase that is essential for cell division. This chain is Probable peptidoglycan glycosyltransferase FtsW, found in Pseudomonas fluorescens (strain SBW25).